Consider the following 159-residue polypeptide: MHLSNLLKVNYRFEGPHQVDVIDGGTLAQLLIPLITSYDYVIVIDCVDAGGGKIGEVYFFDFDNVPNVITWQGSAHEVEMLQTLRMTEVNGDLPPVKIVGVIPSIIGSETAFDLSKEVAEASVTMEKIVLNHLQELGVEITRIDSKTIDEIAPLSYKGF.

It belongs to the peptidase A31 family.

In Wolinella succinogenes (strain ATCC 29543 / DSM 1740 / CCUG 13145 / JCM 31913 / LMG 7466 / NCTC 11488 / FDC 602W) (Vibrio succinogenes), this protein is Protein HydD (hydD).